A 1391-amino-acid polypeptide reads, in one-letter code: DNA-directed RNA polymerase subunit beta (1391 aa).

This sequence belongs to the RNA polymerase beta chain family. The RNAP catalytic core consists of 2 alpha, 1 beta, 1 beta' and 1 omega subunit. When a sigma factor is associated with the core the holoenzyme is formed, which can initiate transcription.

It carries out the reaction RNA(n) + a ribonucleoside 5'-triphosphate = RNA(n+1) + diphosphate. In terms of biological role, DNA-dependent RNA polymerase catalyzes the transcription of DNA into RNA using the four ribonucleoside triphosphates as substrates. This Granulibacter bethesdensis (strain ATCC BAA-1260 / CGDNIH1) protein is DNA-directed RNA polymerase subunit beta.